The sequence spans 397 residues: Enoyl-[acyl-carrier-protein] reductase [NADH] (397 aa).

Residues 48–53 (GASTGY), 74–75 (FE), 111–112 (DA), and 139–140 (LA) contribute to the NAD(+) site. Residue tyrosine 225 coordinates substrate. Catalysis depends on tyrosine 235, which acts as the Proton donor. NAD(+)-binding positions include lysine 244 and 273 to 275 (VVT).

Belongs to the TER reductase family. Monomer.

The catalysed reaction is a 2,3-saturated acyl-[ACP] + NAD(+) = a (2E)-enoyl-[ACP] + NADH + H(+). It participates in lipid metabolism; fatty acid biosynthesis. In terms of biological role, involved in the final reduction of the elongation cycle of fatty acid synthesis (FAS II). Catalyzes the reduction of a carbon-carbon double bond in an enoyl moiety that is covalently linked to an acyl carrier protein (ACP). The protein is Enoyl-[acyl-carrier-protein] reductase [NADH] of Edwardsiella ictaluri (strain 93-146).